Reading from the N-terminus, the 304-residue chain is ATP synthase gamma chain (304 aa).

The protein belongs to the ATPase gamma chain family. In terms of assembly, F-type ATPases have 2 components, CF(1) - the catalytic core - and CF(0) - the membrane proton channel. CF(1) has five subunits: alpha(3), beta(3), gamma(1), delta(1), epsilon(1). CF(0) has three main subunits: a, b and c.

It localises to the cell membrane. Its function is as follows. Produces ATP from ADP in the presence of a proton gradient across the membrane. The gamma chain is believed to be important in regulating ATPase activity and the flow of protons through the CF(0) complex. The sequence is that of ATP synthase gamma chain from Chloroherpeton thalassium (strain ATCC 35110 / GB-78).